Reading from the N-terminus, the 268-residue chain is Small ribosomal subunit protein eS1 (268 aa).

The disordered stretch occupies residues 1–21; it reads MAVGKNKGLSKGGKKGGKKKV.

The protein belongs to the eukaryotic ribosomal protein eS1 family. As to quaternary structure, component of the small ribosomal subunit. Mature ribosomes consist of a small (40S) and a large (60S) subunit. The 40S subunit contains about 33 different proteins and 1 molecule of RNA (18S). The 60S subunit contains about 49 different proteins and 3 molecules of RNA (28S, 5.8S and 5S).

It localises to the cytoplasm. Its function is as follows. Essential for oogenesis; required for late follicle cell development. The sequence is that of Small ribosomal subunit protein eS1 from Drosophila sechellia (Fruit fly).